We begin with the raw amino-acid sequence, 570 residues long: Biotin biosynthesis bifunctional protein BioHC (570 aa).

Residues 1 to 29 form a disordered region; it reads MTEVNVRAAATPEEKPFLNRTRHEPANPQ. The carboxylesterase stretch occupies residues 1–279; the sequence is MTEVNVRAAA…HISHPREVAT (279 aa). A compositionally biased stretch (basic and acidic residues) spans 12-25; sequence PEEKPFLNRTRHEP. Substrate-binding positions include Trp41, 105 to 106, and 175 to 179; these read SL and FIALQ. Ser105 acts as the Nucleophile in catalysis. Active-site residues include Asp239 and His267. Residue His267 coordinates substrate. Residues 280–570 form a malonyl-ACP O-methyltransferase region; that stretch reads MINSFLRQQA…RKPLDESASA (291 aa).

The protein in the N-terminal section; belongs to the AB hydrolase superfamily. Carboxylesterase BioH family. In the C-terminal section; belongs to the methyltransferase superfamily.

It catalyses the reaction a carboxylic ester + H2O = an alcohol + a carboxylate + H(+). It carries out the reaction malonyl-[ACP] + S-adenosyl-L-methionine = malonyl-[ACP] methyl ester + S-adenosyl-L-homocysteine. Its pathway is cofactor biosynthesis; biotin biosynthesis. Functionally, converts the free carboxyl group of a malonyl-thioester to its methyl ester by transfer of a methyl group from S-adenosyl-L-methionine (SAM). It allows to synthesize pimeloyl-ACP via the fatty acid synthetic pathway. The physiological role of BioH is to remove the methyl group introduced by BioC when the pimeloyl moiety is complete. It allows to synthesize pimeloyl-ACP via the fatty acid synthetic pathway through the hydrolysis of the ester bonds of pimeloyl-ACP esters. The polypeptide is Biotin biosynthesis bifunctional protein BioHC (bioC) (Teredinibacter turnerae (strain ATCC 39867 / T7901)).